We begin with the raw amino-acid sequence, 311 residues long: MTDYRTQPINQKNADFVEQVADRIEEMQLEGRSLWQDAKRRFFRNKAAVASLIILAFIIIFITVAPWFFPFTYEDTDWNMMSAAPTMEGYHFFGTDASGRDLLVRTAIGGRISLLVGIAGAFISVTIGTIYGAISGYVGGKTDMLMMRFLEILSSFPFMFFVILLVTLFGQNIFLIFIAIGAIAWLGLARIVRGQTLSLKNKEFVEAAIVCGVPRRQIILKHIIPNVLGLVAVYASLEVPGLILFESFLSFLGLGTQEPMSSWGALLSDGAAQMEVSPWLLIFPAFFLCLTLFCFNFIGDGLRDALDPKDR.

The Cytoplasmic portion of the chain corresponds to 1-48; that stretch reads MTDYRTQPINQKNADFVEQVADRIEEMQLEGRSLWQDAKRRFFRNKAA. Residues 49–69 traverse the membrane as a helical segment; it reads VASLIILAFIIIFITVAPWFF. Residues 70 to 113 are Periplasmic-facing; the sequence is PFTYEDTDWNMMSAAPTMEGYHFFGTDASGRDLLVRTAIGGRIS. The region spanning 110 to 299 is the ABC transmembrane type-1 domain; the sequence is GRISLLVGIA…LTLFCFNFIG (190 aa). The chain crosses the membrane as a helical span at residues 114 to 134; sequence LLVGIAGAFISVTIGTIYGAI. Over 135–146 the chain is Cytoplasmic; that stretch reads SGYVGGKTDMLM. The chain crosses the membrane as a helical span at residues 147-169; sequence MRFLEILSSFPFMFFVILLVTLF. Residues 170-172 lie on the Periplasmic side of the membrane; it reads GQN. The helical transmembrane segment at 173–192 threads the bilayer; it reads IFLIFIAIGAIAWLGLARIV. At 193 to 222 the chain is on the cytoplasmic side; it reads RGQTLSLKNKEFVEAAIVCGVPRRQIILKH. The chain crosses the membrane as a helical span at residues 223-243; that stretch reads IIPNVLGLVAVYASLEVPGLI. Over 244-278 the chain is Periplasmic; that stretch reads LFESFLSFLGLGTQEPMSSWGALLSDGAAQMEVSP. A helical transmembrane segment spans residues 279 to 299; it reads WLLIFPAFFLCLTLFCFNFIG. The Cytoplasmic portion of the chain corresponds to 300 to 311; it reads DGLRDALDPKDR.

Belongs to the binding-protein-dependent transport system permease family. OppBC subfamily. The complex is composed of two ATP-binding proteins (OppD and OppF), two transmembrane proteins (OppB and OppC) and a solute-binding protein (OppA).

The protein localises to the cell inner membrane. Functionally, part of the ABC transporter complex OppABCDF involved in the uptake of oligopeptides. Probably responsible for the translocation of the substrate across the membrane. The chain is Oligopeptide transport system permease protein OppC (oppC) from Haemophilus influenzae (strain ATCC 51907 / DSM 11121 / KW20 / Rd).